Reading from the N-terminus, the 420-residue chain is Transcription termination factor Rho (420 aa).

Residues 49–124 (DIFGGGVLEI…LKVDQVNDDK (76 aa)) form the Rho RNA-BD domain. ATP is bound by residues 170–175 (GKGQRG), 182–187 (KAGKTM), and Arg-213.

This sequence belongs to the Rho family. As to quaternary structure, homohexamer. The homohexamer assembles into an open ring structure.

In terms of biological role, facilitates transcription termination by a mechanism that involves Rho binding to the nascent RNA, activation of Rho's RNA-dependent ATPase activity, and release of the mRNA from the DNA template. The polypeptide is Transcription termination factor Rho (Haemophilus influenzae (strain ATCC 51907 / DSM 11121 / KW20 / Rd)).